Reading from the N-terminus, the 448-residue chain is N-succinylarginine dihydrolase (448 aa).

Substrate-binding positions include G19–S28, N110, and H137–R138. E174 is an active-site residue. R214 is a binding site for substrate. Residue H250 is part of the active site. D252 and N365 together coordinate substrate. Catalysis depends on C371, which acts as the Nucleophile.

The protein belongs to the succinylarginine dihydrolase family. In terms of assembly, homodimer.

It carries out the reaction N(2)-succinyl-L-arginine + 2 H2O + 2 H(+) = N(2)-succinyl-L-ornithine + 2 NH4(+) + CO2. Its pathway is amino-acid degradation; L-arginine degradation via AST pathway; L-glutamate and succinate from L-arginine: step 2/5. Its function is as follows. Catalyzes the hydrolysis of N(2)-succinylarginine into N(2)-succinylornithine, ammonia and CO(2). The polypeptide is N-succinylarginine dihydrolase (Pseudomonas syringae pv. tomato (strain ATCC BAA-871 / DC3000)).